The chain runs to 166 residues: MSAEPSQFNKLLTKYDFKLASASEEYRNRRKRQMMLFMGSAAITIFTSRLAYKSTITRQYVPSLFQGNHAPPLSYNFTSDAAVAVGTGTLLCGSVSSMVIFGTCWIIDVSNFQEFGWKMKSLMGGYEKQKELAKLPMDEESAFLQDSLNDILDGKYDFDETTPAEK.

A run of 2 helical transmembrane segments spans residues 35–52 (MLFM…RLAY) and 81–103 (AAVA…IFGT).

It belongs to the AIM11 family.

The protein resides in the membrane. The chain is Altered inheritance of mitochondria protein 11 (AIM11) from Debaryomyces hansenii (strain ATCC 36239 / CBS 767 / BCRC 21394 / JCM 1990 / NBRC 0083 / IGC 2968) (Yeast).